The following is a 457-amino-acid chain: F-box/LRR-repeat protein At3g62440 (457 aa).

Positions 1–49 (MDRISNLPDEIICHIGSFLSAREAAFTTVLSKRWHNLFTIVPDLHFDSS) constitute an F-box domain. LRR repeat units lie at residues 53 to 79 (GESL…SLKW), 147 to 174 (LSLG…SLYH), 177 to 202 (FYEF…TVCG), 229 to 254 (WDAF…YYSD), 283 to 310 (WGKG…NLYT), and 337 to 362 (LSNF…NIDG).

The chain is F-box/LRR-repeat protein At3g62440 from Arabidopsis thaliana (Mouse-ear cress).